The sequence spans 329 residues: Synaptonemal complex central element protein 1 (329 aa).

The interval 1-29 is disordered; sequence MATRPQPLGMEPEGSADLLHGPEGARGQY. Coiled-coil stretches lie at residues 54–167 and 194–294; these read RIEV…LETL and KEQL…ILAH. Positions 291-329 are disordered; it reads ILAHSTQNEEDSSWRMASPKPVEVHEETAQDQERPSSRT. Residues 312–329 are compositionally biased toward basic and acidic residues; it reads VEVHEETAQDQERPSSRT.

This sequence belongs to the SYCE family. Homodimer. Found in a complex with SYCP1 and SYCE2. Interacts with SYCP1, SYCE2 and SYCE3. Interacts with SIX6OS1. Meiotic cells (at protein level). Expressed in the ovary and testis.

It localises to the nucleus. The protein resides in the chromosome. In terms of biological role, major component of the transverse central element of synaptonemal complexes (SCS), formed between homologous chromosomes during meiotic prophase. Requires SYCP1 in order to be incorporated into the central element. May have a role in the synaptonemal complex assembly, stabilization and recombination. The polypeptide is Synaptonemal complex central element protein 1 (Syce1) (Mus musculus (Mouse)).